Reading from the N-terminus, the 409-residue chain is Arginine deiminase (409 aa).

The Amidino-cysteine intermediate role is filled by cysteine 399.

The protein belongs to the arginine deiminase family.

It localises to the cytoplasm. It carries out the reaction L-arginine + H2O = L-citrulline + NH4(+). The protein operates within amino-acid degradation; L-arginine degradation via ADI pathway; carbamoyl phosphate from L-arginine: step 1/2. In Borreliella afzelii (strain PKo) (Borrelia afzelii), this protein is Arginine deiminase.